Consider the following 297-residue polypeptide: Phosphoribosylaminoimidazole-succinocarboxamide synthase (297 aa).

Belongs to the SAICAR synthetase family.

It carries out the reaction 5-amino-1-(5-phospho-D-ribosyl)imidazole-4-carboxylate + L-aspartate + ATP = (2S)-2-[5-amino-1-(5-phospho-beta-D-ribosyl)imidazole-4-carboxamido]succinate + ADP + phosphate + 2 H(+). It participates in purine metabolism; IMP biosynthesis via de novo pathway; 5-amino-1-(5-phospho-D-ribosyl)imidazole-4-carboxamide from 5-amino-1-(5-phospho-D-ribosyl)imidazole-4-carboxylate: step 1/2. This Saccharopolyspora erythraea (strain ATCC 11635 / DSM 40517 / JCM 4748 / NBRC 13426 / NCIMB 8594 / NRRL 2338) protein is Phosphoribosylaminoimidazole-succinocarboxamide synthase.